We begin with the raw amino-acid sequence, 162 residues long: Mitochondrial fission process protein 1 (162 aa).

The next 3 membrane-spanning stretches (helical) occupy residues 36-56 (SLVKPVVVKFSYVVAFGYVAA), 81-101 (AIIAVDTVLWQTFASVLIPGF), and 128-148 (TVTALGLATIPFIVHPIDAFV).

Belongs to the MTFP1 family.

The protein resides in the mitochondrion inner membrane. Involved in the mitochondrial division probably by regulating membrane fission. Loss-of-function leads to apoptosis. This chain is Mitochondrial fission process protein 1, found in Caenorhabditis briggsae.